Reading from the N-terminus, the 542-residue chain is uncharacterized protein (542 aa).

12 helical membrane passes run 12-32 (LVFG…GTVL), 57-77 (FGDV…AILY), 94-114 (VIVM…SWTA), 123-143 (AAAV…AGLA), 168-188 (LFAV…AALV), 191-211 (FVVS…LVTL), 216-236 (IDAP…AFLL), 243-263 (SGVV…PTVI), 277-297 (IATF…IPGA), 313-333 (VLAL…VQAT), 358-378 (VTSW…AVPM), and 391-411 (LIIF…GTSL).

Belongs to the monovalent cation:proton antiporter 1 (CPA1) transporter (TC 2.A.36) family.

It is found in the cell membrane. This is an uncharacterized protein from Mycobacterium bovis (strain ATCC BAA-935 / AF2122/97).